A 572-amino-acid polypeptide reads, in one-letter code: NADP-dependent malic enzyme (572 aa).

An N-acetylmethionine modification is found at methionine 1. The active-site Proton donor is tyrosine 102. An NADP(+)-binding site is contributed by arginine 155. The active-site Proton acceptor is lysine 173. 3 residues coordinate a divalent metal cation: glutamate 245, aspartate 246, and aspartate 269. Residues aspartate 269 and glycine 301–glutamate 318 contribute to the NADP(+) site. Serine 336 is subject to Phosphoserine. Asparagine 408 serves as a coordination point for NADP(+).

Belongs to the malic enzymes family. As to quaternary structure, homotetramer. Mg(2+) is required as a cofactor. Requires Mn(2+) as cofactor. As to expression, ubiquitous. Up-regulated by 3,5,3'-triiodo-L-thyronine in the liver, kidney and heart.

Its subcellular location is the cytoplasm. It carries out the reaction (S)-malate + NADP(+) = pyruvate + CO2 + NADPH. It catalyses the reaction oxaloacetate + H(+) = pyruvate + CO2. In terms of biological role, catalyzes the oxidative decarboxylation of (S)-malate in the presence of NADP(+) and divalent metal ions, and decarboxylation of oxaloacetate. The chain is NADP-dependent malic enzyme (Me1) from Rattus norvegicus (Rat).